A 403-amino-acid chain; its full sequence is Peptidyl-prolyl cis-trans isomerase FKBP8 (403 aa).

Residues 26–54 (VLDGVDDAEEEDDLSGLPPLEDMGQPTVE) are disordered. The span at 28-39 (DGVDDAEEEDDL) shows a compositional bias: acidic residues. In terms of domain architecture, PPIase FKBP-type spans 110-195 (GQVVTVHLQM…CLEVTLKTAE (86 aa)). Residues 212-245 (ANRKRECGNAHYQRADFVLAANSYDLAIKAITSN) form a TPR 1 repeat. Residues K240, K262, K264, and K275 each participate in a glycyl lysine isopeptide (Lys-Gly) (interchain with G-Cter in ubiquitin) cross-link. TPR repeat units lie at residues 263-296 (VKCL…QPDN) and 297-330 (IKAL…EPSN). A Phosphoserine modification is found at S287. Residues K298, K305, K325, K331, K339, K342, and K343 each participate in a glycyl lysine isopeptide (Lys-Gly) (interchain with G-Cter in ubiquitin) cross-link. Residues 381–401 (WLFGATAVALGGVALSVVIAA) traverse the membrane as a helical segment.

Homomultimers or heteromultimers (Potential). Forms heterodimer with calmodulin. When activated by calmodulin and calcium, interacts with the BH4 domain of BCL2 and weakly with BCLX isoform Bcl-X(L). Does not bind and inhibit calcineurin. Interacts with ZFYVE27; may negatively regulate ZFYVE27 phosphorylation. The cofactor is Ca(2+). In terms of processing, ubiquitinated by PRKN during mitophagy, leading to its degradation and enhancement of mitophagy. Deubiquitinated by USP30.

It localises to the mitochondrion membrane. It carries out the reaction [protein]-peptidylproline (omega=180) = [protein]-peptidylproline (omega=0). Its function is as follows. Constitutively inactive PPiase, which becomes active when bound to calmodulin and calcium. Seems to act as a chaperone for BCL2, targets it to the mitochondria and modulates its phosphorylation state. The BCL2/FKBP8/calmodulin/calcium complex probably interferes with the binding of BCL2 to its targets. The active form of FKBP8 may therefore play a role in the regulation of apoptosis. This is Peptidyl-prolyl cis-trans isomerase FKBP8 (Fkbp8) from Rattus norvegicus (Rat).